A 137-amino-acid polypeptide reads, in one-letter code: Small ribosomal subunit protein uS12 (137 aa).

Residues 1-57 (MPTINQLVRKPRKSKVEKSKSPALNVGYNSHKKVQTNVSSPQKRGVATRVGTMTPKK) form a disordered region. Asp-102 carries the post-translational modification 3-methylthioaspartic acid.

Belongs to the universal ribosomal protein uS12 family. As to quaternary structure, part of the 30S ribosomal subunit. Contacts proteins S8 and S17. May interact with IF1 in the 30S initiation complex.

In terms of biological role, with S4 and S5 plays an important role in translational accuracy. Its function is as follows. Interacts with and stabilizes bases of the 16S rRNA that are involved in tRNA selection in the A site and with the mRNA backbone. Located at the interface of the 30S and 50S subunits, it traverses the body of the 30S subunit contacting proteins on the other side and probably holding the rRNA structure together. The combined cluster of proteins S8, S12 and S17 appears to hold together the shoulder and platform of the 30S subunit. This chain is Small ribosomal subunit protein uS12, found in Streptococcus pneumoniae serotype 2 (strain D39 / NCTC 7466).